The primary structure comprises 411 residues: S-inosyl-L-homocysteine hydrolase (411 aa).

Asp121 and Glu146 together coordinate substrate. Residue 147-149 (TTT) participates in NAD(+) binding. 2 residues coordinate substrate: Lys176 and Asp180. NAD(+)-binding positions include Asn181, 210–215 (GYGWCG), Glu233, Asn268, 289–291 (SGH), and Asn335.

The protein belongs to the adenosylhomocysteinase family. NAD(+) is required as a cofactor.

The protein resides in the cytoplasm. The enzyme catalyses S-inosyl-L-homocysteine + H2O = L-homocysteine + inosine. Its pathway is amino-acid biosynthesis; S-adenosyl-L-methionine biosynthesis. Catalyzes the hydrolysis of S-inosyl-L-homocysteine (SIH) to L-homocysteine (Hcy) and inosine. Likely functions in a S-adenosyl-L-methionine (SAM) recycling pathway from S-adenosyl-L-homocysteine (SAH) produced from SAM-dependent methylation reactions. Can also catalyze the reverse reaction in vitro, i.e. the synthesis of SIH from Hcy and inosine. The sequence is that of S-inosyl-L-homocysteine hydrolase from Methanosarcina acetivorans (strain ATCC 35395 / DSM 2834 / JCM 12185 / C2A).